The sequence spans 660 residues: Dual specificity mitogen-activated protein kinase kinase 1 (660 aa).

The segment covering 1–57 (MNTNTNTNTNISSSGNNIINTPTTNNNNKNNNNNNNNNNNSNNSNNNSSNNNNNNNN) has biased composition (low complexity). Disordered regions lie at residues 1-60 (MNTN…NAVG), 105-169 (KGES…FNNL), and 204-229 (NNNYNNYNNNNNSNNNNNNYNNSNNN). Lys105 is covalently cross-linked (Glycyl lysine isopeptide (Lys-Gly) (interchain with G-Cter in SUMO)). The span at 123-148 (LHSNLNPQLLASPTSSESMDFNQGFY) shows a compositional bias: polar residues. Residues 149–169 (NNNNNNNNNNNNNNLNNFNNL) are compositionally biased toward low complexity. The region spanning 292 to 641 (LKIIRVLGRG…ASNLLNHEFV (350 aa)) is the Protein kinase domain. ATP-binding positions include 298-306 (LGRGAGGVV) and Lys321. Asp414 functions as the Proton acceptor in the catalytic mechanism. Disordered stretches follow at residues 491–510 (SNLPHQQQQPLQQQQQQQQQ) and 539–573 (NNSNNNIRNSNNNNNNNNNNNNNNNNNNNNNVLDI). Low complexity-rich tracts occupy residues 496 to 510 (QQQQPLQQQQQQQQQ) and 539 to 569 (NNSNNNIRNSNNNNNNNNNNNNNNNNNNNNN).

Belongs to the protein kinase superfamily. STE Ser/Thr protein kinase family. MAP kinase kinase subfamily. In terms of assembly, interacts with mip1. The cofactor is Mg(2+). In terms of processing, sumoylated and ubiquitinated in response to chemoattractant stimulation. Sumoylation is linked to kinase activation and results in translocation.

Its subcellular location is the cytoplasm. It is found in the nucleus. It carries out the reaction L-seryl-[protein] + ATP = O-phospho-L-seryl-[protein] + ADP + H(+). It catalyses the reaction L-threonyl-[protein] + ATP = O-phospho-L-threonyl-[protein] + ADP + H(+). The enzyme catalyses L-tyrosyl-[protein] + ATP = O-phospho-L-tyrosyl-[protein] + ADP + H(+). Required for cAMP-mediated activation of guanylyl cyclase activity and plays an essential role in aggregation, morphogenesis, and chemotaxis. Appears to act upstream of erk1 but not erk2. This is Dual specificity mitogen-activated protein kinase kinase 1 from Dictyostelium discoideum (Social amoeba).